The chain runs to 251 residues: Flap endonuclease Xni (251 aa).

Residue aspartate 104 participates in Mg(2+) binding. The 5'-3' exonuclease domain occupies 160–249 (VLPRQLPDYW…IDGNLQQLRL (90 aa)). K(+)-binding residues include leucine 171, alanine 172, proline 180, valine 182, and isoleucine 185. The interval 184-189 (GIGPKS) is interaction with DNA.

It belongs to the Xni family. The cofactor is Mg(2+). It depends on K(+) as a cofactor.

Has flap endonuclease activity. During DNA replication, flap endonucleases cleave the 5'-overhanging flap structure that is generated by displacement synthesis when DNA polymerase encounters the 5'-end of a downstream Okazaki fragment. In Salmonella typhimurium (strain LT2 / SGSC1412 / ATCC 700720), this protein is Flap endonuclease Xni.